We begin with the raw amino-acid sequence, 275 residues long: Leucine-rich repeat-containing protein 3C (275 aa).

The signal sequence occupies residues 1 to 41 (MRMTSSSFVSYCTPGLCQFMAMLPTAGHLLPLLLVIGTGGT). The LRRNT domain maps to 42 to 79 (VPSPQVPPRGCYVAKEAGERTFRCSQAGLSAVPSGIPN). 3 LRR repeats span residues 80–101 (DTRK…AFQH), 104–125 (VLEE…AFQG), and 129–150 (TLRH…AFVG). N-linked (GlcNAc...) asparagine glycosylation occurs at Asn156. Residues 160 to 212 (NPWHCDCALQEVLRQVRLVPGTGTGIVCGSGARPDLVGQEFLLLAGEEELCGS) enclose the LRRCT domain. Residues 225–245 (LLVTMGGWLTLMVAYLVHYVW) traverse the membrane as a helical segment.

It belongs to the LRRC3 family.

It localises to the membrane. This Homo sapiens (Human) protein is Leucine-rich repeat-containing protein 3C (LRRC3C).